The sequence spans 245 residues: Probable phosphatase NT01EI_1577 (245 aa).

Zn(2+) contacts are provided by His7, His9, His15, His40, Glu73, His101, His131, Asp192, and His194.

It belongs to the PHP family. In terms of assembly, homotrimer. The cofactor is Zn(2+).

The polypeptide is Probable phosphatase NT01EI_1577 (Edwardsiella ictaluri (strain 93-146)).